Reading from the N-terminus, the 328-residue chain is MRNPDTLGLWTKTMVALRRFTVLAIATVSVFLITDLGLPQAASAYPFWAQETAPLTPREATGRIVCANCHLAQKAAEVEIPQAVLPDTVFEAVVKIPYDLDSQQVLGDGSKGGLNVGAVLMLPEGFKIAPPDRLSEGLKEKVGGTYFQPYREDMENVVIVGPLPGEQYQEIVFPVLSPDPAKDKSINYGKFAVHLGANRGRGQIYPTGLLSNNNAFKAPNAGTISEVNALEAGGYQLILTTADGTETVDIPAGPELIVSAGQTVEAGEFLTNNPNVGGFGQKDTEVVLQNPTRIKFLVLFLAGIMLSQILLVLKKKQIEKVQAAELNF.

Residues 1–44 (MRNPDTLGLWTKTMVALRRFTVLAIATVSVFLITDLGLPQAASA) form the signal peptide. Heme contacts are provided by Tyr45, Cys66, Cys69, and His70. Residues 296–313 (FLVLFLAGIMLSQILLVL) traverse the membrane as a helical segment.

It belongs to the cytochrome f family. In terms of assembly, the 4 large subunits of the cytochrome b6-f complex are cytochrome b6, subunit IV (17 kDa polypeptide, PetD), cytochrome f and the Rieske protein, while the 4 small subunits are PetG, PetL, PetM and PetN. The complex functions as a dimer. Requires heme as cofactor.

It is found in the cellular thylakoid membrane. Functionally, component of the cytochrome b6-f complex, which mediates electron transfer between photosystem II (PSII) and photosystem I (PSI), cyclic electron flow around PSI, and state transitions. The chain is Cytochrome f (petA) from Synechocystis sp. (strain ATCC 27184 / PCC 6803 / Kazusa).